The following is a 536-amino-acid chain: Proto-oncogene tyrosine-protein kinase Yrk (536 aa).

Gly-2 carries N-myristoyl glycine lipidation. Residues Cys-3 and Cys-6 are each lipidated (S-palmitoyl cysteine). Positions 10–36 are disordered; sequence ISGKGQGGSGTGTPAHPPSQYDPDPTQ. In terms of domain architecture, SH3 spans 81–142; that stretch reads GGVTLFIALY…PSNYVAPVDS (62 aa). The 98-residue stretch at 148-245 folds into the SH2 domain; it reads WYFGKIGRKD…GLCCRLAVPC (98 aa). Residues 270–523 form the Protein kinase domain; the sequence is LQLLQKLGNG…YLQSFLEDYF (254 aa). ATP is bound by residues 276–284 and Lys-298; that span reads LGNGQFGEV. The Proton acceptor role is filled by Asp-389. At Tyr-419 the chain carries Phosphotyrosine; by autocatalysis. Tyr-530 carries the post-translational modification Phosphotyrosine.

It belongs to the protein kinase superfamily. Tyr protein kinase family. SRC subfamily. Post-translationally, phosphorylated. There are elevated levels of this protein in neural and hematopoietic tissues.

The enzyme catalyses L-tyrosyl-[protein] + ATP = O-phospho-L-tyrosyl-[protein] + ADP + H(+). May participate in signaling pathways. This Gallus gallus (Chicken) protein is Proto-oncogene tyrosine-protein kinase Yrk (YRK).